Consider the following 335-residue polypeptide: Glycerol-3-phosphate dehydrogenase [NAD(P)+] (335 aa).

Positions 15, 36, and 109 each coordinate NADPH. Residues Lys-109, Gly-137, and Ser-139 each contribute to the sn-glycerol 3-phosphate site. Position 141 (Ala-141) interacts with NADPH. Residues Lys-192, Asp-245, Ser-255, Arg-256, and Asn-257 each coordinate sn-glycerol 3-phosphate. Residue Lys-192 is the Proton acceptor of the active site. Arg-256 contacts NADPH. NADPH is bound by residues Leu-279 and Glu-281.

This sequence belongs to the NAD-dependent glycerol-3-phosphate dehydrogenase family.

It is found in the cytoplasm. It carries out the reaction sn-glycerol 3-phosphate + NAD(+) = dihydroxyacetone phosphate + NADH + H(+). The enzyme catalyses sn-glycerol 3-phosphate + NADP(+) = dihydroxyacetone phosphate + NADPH + H(+). Its pathway is membrane lipid metabolism; glycerophospholipid metabolism. Its function is as follows. Catalyzes the reduction of the glycolytic intermediate dihydroxyacetone phosphate (DHAP) to sn-glycerol 3-phosphate (G3P), the key precursor for phospholipid synthesis. The polypeptide is Glycerol-3-phosphate dehydrogenase [NAD(P)+] (Beijerinckia indica subsp. indica (strain ATCC 9039 / DSM 1715 / NCIMB 8712)).